The primary structure comprises 790 residues: Protein SEY1 (790 aa).

Residues 1-692 (MELSEGELSH…KRSIVQHITQ (692 aa)) are Cytoplasmic-facing. One can recognise a GB1/RHD3-type G domain in the interval 55-284 (GNNYHIISVF…VSNELFKPEY (230 aa)). A GTP-binding site is contributed by 65-72 (GSQSTGKS). Residues 693 to 713 (IPYYIYLIILVLGWNEFMAII) form a helical membrane-spanning segment. At 714–716 (RNP) the chain is on the lumenal side. Residues 717–737 (LFFSLSIVLGATVYVLYYLGL) form a helical membrane-spanning segment. Residues 738–790 (LRPALVVAQRTMDEVIVMAKTKLREVLIDDHEVTGRQLNKMAGSKENIELDDM) lie on the Cytoplasmic side of the membrane.

It belongs to the TRAFAC class dynamin-like GTPase superfamily. GB1/RHD3 GTPase family. RHD3 subfamily.

It localises to the endoplasmic reticulum membrane. In terms of biological role, cooperates with the reticulon proteins and tubule-shaping DP1 family proteins to generate and maintain the structure of the tubular endoplasmic reticulum network. Has GTPase activity, which is required for its function in ER organization. This Candida albicans (strain WO-1) (Yeast) protein is Protein SEY1.